Here is a 1776-residue protein sequence, read N- to C-terminus: MAFELALNALASSTHKDSSLNPVLNSAVQPLQTSLQNFPWIIGKEHLPFLLAAGIPTSGFGCNPHPHAVHKVIETFLLFNHWSFMATVQASVMFMKPSKFKKLASVNPNFSELVNYRLTAADSVRYPSTSTSLPKYEIVFMHDALMYFNPSQILDLFIQCPSLQRLHCSLVVPPESSFTDLSLHPNLYTYTISGNTLHYVPEGHHAGSYDQPLDAISWLKLNSIHSPHLNLSVSKLESWGPVHSLLITRGLPHLPSSEKQQVSFHIPNCLPLPEATFLHQPLRHRLVPTEVYDALFTYTRAVRTLRTSDPAGFVRTHSNKPQYSWVTSRAWDNLQTYALLNAPVRPVVLFDFFLSPLKKFQLFMSQHINSLVIKALPFLGLIPPLVKLTTLGFPIPSVSHFQILFFTMIGPSGQFILEAFPSMLHPAISYLESCGLVPRLPPPVAQQLQTMGILRKRSAFSLKTSLSTVKWPSWKITALISALPAALSVFLKTISPLSLQSLHDGYNAHLHPSPFNLSWSLETFHVQSPSPFLPLSLTPPSPSEEIALPPPIFRVPPPLPAQETPSPPAPALVPPTQPPQPQPWEEIISTFLSSLNASSHKPSPSSAPLESPSPIPESFEVLAEAPQHQRSINECGALNQLPLPVPSPLQNSTNPKPPFPSSDLLSDMSCTGPVVEFETIFPAEYHMSNGSFPTRLRGHPRSSAPFPQKHCLLTAVASQLSYTEHQLWEFLCDMLPDSLLTNSEVENFGLSTDHLTCLSYRLHFECIIHTSHSTIPYGIKKASTVIQISYIDGPPKHFKAFIKLAAAAPGSNPSKSNLVRAALRFKYNDAFLPFWDAHQHTISVPHAKNLISNMKNGFDGITSQLSGPSNKSPKMKLLELDATIDVSFPRKCDVIHIAGFPGCGKSHPIQKLLQTPAFRHFRLSVPTNELRSEWKRDLNLPESEVWRLCTWETALFKSSNILVVDEIYKLPRGYLDLILLADPSIQLVIMLGDPLQGEYHSSHPSSSNSRLESETTRLSKYIDCYCWWTYRCPKAVADLFGVKTFNSNEGFIRAVLSHPPNLPNLVNSIATANTMQSLGHHALTISSSQGMTYSDPVTVLLDRHSLLITPQTALVALTRSRSGIYFIGSMYTASGSAGTSYMFSCALTGLPVDMMSAFPLFHTLPLIHEPIRSRRHRLVAGHTPSLHVPPSNKWPHRLHLPPHIPTSHSKDVILAHGIVASNAPERRLTTLHLPPTRLPLHFDLESCNPSTVSTSSTSNSEVPFTHAFLGESFEELAAHFLPAHDPDLKEVTVGDQTSQQFPYLDQPYTLSCQPSSLLAASHKPASDPTLLIFSISKRLRFRASSSPYAFTPNDLILGHLLYTNWCKAFGRCPNSTIPFNPALFAECICLNEYAQLSSKTQATIVSNASRSDPDWRYTVVRIFAKSQHKVNDGSIFGSWKACQTLALMHDFVILTLGPVKKYQRIIDHYDRPNFIYTHCGKTPSELSAWSHSFLKGDAYICNDYTSFDQSQHGEAVIFESLKMHRVGIPRHLIDLHIYLKTNVSTQFGPLTCMRLTGEPGTYDDNTDYNLAVIFSQYVISDHPIMVSGDDSVICGHPPINPNWPAVEKLLHLRFKTEETSLPLFCGYYVGPTGCCRNPFALFAKLMISYDKGNLFETLPSYLYEFSIGHRLGDVVRLLFPDHLLKYYSACWDLFCRKCTASQKLILSFEPIPPSFFSKLASTSRWVSKVLFSDLPTKIRDMLISSSKLPSYHQDPRVQYLESELLTSFNHGRLSTN.

In terms of domain architecture, Alphavirus-like MT spans 58–219 (SGFGCNPHPH…DQPLDAISWL (162 aa)). Residues 546-582 (IALPPPIFRVPPPLPAQETPSPPAPALVPPTQPPQPQ) show a composition bias toward pro residues. 2 disordered regions span residues 546-583 (IALP…QPQP) and 595-615 (LNAS…PSPI). A Peptidase C21 domain is found at 658–812 (PFPSSDLLSD…KLAAAAPGSN (155 aa)). Residues cysteine 711 and histidine 797 each act as for protease activity in the active site. A (+)RNA virus helicase ATP-binding domain is found at 866–1026 (SGPSNKSPKM…RLSKYIDCYC (161 aa)). Residue 899-906 (GFPGCGKS) participates in ATP binding. The (+)RNA virus helicase C-terminal domain occupies 1027-1159 (WWTYRCPKAV…LPVDMMSAFP (133 aa)). Residues 1497 to 1603 (DAYICNDYTS…CGHPPINPNW (107 aa)) enclose the RdRp catalytic domain.

Belongs to the Tymoviridae non-structural replication polyprotein family. Post-translationally, specific enzymatic cleavages by the host yield mature proteins.

It carries out the reaction RNA(n) + a ribonucleoside 5'-triphosphate = RNA(n+1) + diphosphate. Its function is as follows. Acts as a cysteine protease, methyltransferase and deubiquitinase. The cysteine protease activity cleaves the polyprotein giving rise to mature proteins. The methyltransferase domain is probably involved in viral RNA capping. RNA-directed RNA polymerase is responsible for the replication and transcription of the genome. The protein is Non-structural replication polyprotein of Ononis yellow mosaic virus.